The following is a 295-amino-acid chain: UDP-N-acetylenolpyruvoylglucosamine reductase (295 aa).

The FAD-binding PCMH-type domain maps to 26-189 (VGGRADILFK…VEAEFKGVNS (164 aa)). The active site involves arginine 169. The active-site Proton donor is cysteine 218. Residue glutamate 288 is part of the active site.

Belongs to the MurB family. It depends on FAD as a cofactor.

The protein localises to the cytoplasm. It carries out the reaction UDP-N-acetyl-alpha-D-muramate + NADP(+) = UDP-N-acetyl-3-O-(1-carboxyvinyl)-alpha-D-glucosamine + NADPH + H(+). Its pathway is cell wall biogenesis; peptidoglycan biosynthesis. Its function is as follows. Cell wall formation. This is UDP-N-acetylenolpyruvoylglucosamine reductase from Wolbachia sp. subsp. Drosophila simulans (strain wRi).